Here is a 157-residue protein sequence, read N- to C-terminus: Ribosomal RNA large subunit methyltransferase H (157 aa).

S-adenosyl-L-methionine-binding positions include Leu73, Gly105, and 124-129 (LSLMTF).

The protein belongs to the RNA methyltransferase RlmH family. Homodimer.

It is found in the cytoplasm. It carries out the reaction pseudouridine(1915) in 23S rRNA + S-adenosyl-L-methionine = N(3)-methylpseudouridine(1915) in 23S rRNA + S-adenosyl-L-homocysteine + H(+). Its function is as follows. Specifically methylates the pseudouridine at position 1915 (m3Psi1915) in 23S rRNA. The chain is Ribosomal RNA large subunit methyltransferase H from Flavobacterium johnsoniae (strain ATCC 17061 / DSM 2064 / JCM 8514 / BCRC 14874 / CCUG 350202 / NBRC 14942 / NCIMB 11054 / UW101) (Cytophaga johnsonae).